A 150-amino-acid polypeptide reads, in one-letter code: Protein Turandot X (150 aa).

The first 22 residues, 1–22 (MGLHIGSLLICVFLGILPFATA), serve as a signal peptide directing secretion. Residues 127-150 (REEGQSNHANSPTTLPSRIQKMTK) are disordered. The segment covering 132–150 (SNHANSPTTLPSRIQKMTK) has biased composition (polar residues).

The protein belongs to the Turandot family.

The protein resides in the secreted. Functionally, a humoral factor that may play a role in stress tolerance. The sequence is that of Protein Turandot X from Drosophila simulans (Fruit fly).